Here is a 197-residue protein sequence, read N- to C-terminus: RIP-like protein (197 aa).

Positions 1–20 are disordered; sequence MNSTQSPVYRTSVEQKRHAQ. Residues 122 to 191 form an RIP-type zinc finger; that stretch reads CPVCQIKNLR…GQLYDMCGSC (70 aa).

The sequence is that of RIP-like protein (Ripalpha) from Drosophila melanogaster (Fruit fly).